We begin with the raw amino-acid sequence, 504 residues long: MAPIDFRNKINWHRRFRSPQGSKSEHEILRIFESDRGRIINSPAIRRLQQKTQVFPLERNAAVRTRLTHSMEVQQVGRYIAKEILSRLKEQRLLETYGLDELTGPFESIVEMACLMHDIGNPPFGHFGEAAINDWFKQRLFPLDAASQPQSDDRCIVRDLRLREGEEPLNDLRRKVRQDLCQFEGNAQGIRLVHSLMRMNLTWAQVGCILKYTRPAWWMGEPPASHSYLMKKPGYYLSEEAYIERLRKELSLTPHGRFPLTWIMEAADDISYCVADLEDAVEKRIFSVEELYQHLYDAWGTHEKGSLFSQVVENAWDKSRSNTLSRSTEDQFFMYLRVNTLNKLVPYSAARFIDNLPAIFSGDFNHALLEDDSSFSQLLELYKNVAIRHVFSHPDVEQLELQGYRVISGLLDIYQPLLKLSVEEFTELVETDLMKRLPIETRLLHKLSTRHRLAYVEAVSKIDRTTAQWPVMEYYYRCRLIQDYISGMTDLYAWDEYRRLMAVE.

The region spanning 66-273 (RLTHSMEVQQ…MEAADDISYC (208 aa)) is the HD domain.

It belongs to the dGTPase family. Type 1 subfamily. In terms of assembly, homotetramer. Requires Mg(2+) as cofactor.

The catalysed reaction is dGTP + H2O = 2'-deoxyguanosine + triphosphate + H(+). Functionally, dGTPase preferentially hydrolyzes dGTP over the other canonical NTPs. In Enterobacter sp. (strain 638), this protein is Deoxyguanosinetriphosphate triphosphohydrolase.